Here is a 743-residue protein sequence, read N- to C-terminus: 1,4-alpha-glucan branching enzyme GlgB (743 aa).

Catalysis depends on D423, which acts as the Nucleophile. E476 (proton donor) is an active-site residue.

Belongs to the glycosyl hydrolase 13 family. GlgB subfamily. In terms of assembly, monomer.

The catalysed reaction is Transfers a segment of a (1-&gt;4)-alpha-D-glucan chain to a primary hydroxy group in a similar glucan chain.. Its pathway is glycan biosynthesis; glycogen biosynthesis. In terms of biological role, catalyzes the formation of the alpha-1,6-glucosidic linkages in glycogen by scission of a 1,4-alpha-linked oligosaccharide from growing alpha-1,4-glucan chains and the subsequent attachment of the oligosaccharide to the alpha-1,6 position. The chain is 1,4-alpha-glucan branching enzyme GlgB from Pseudomonas fluorescens (strain Pf0-1).